The following is a 62-amino-acid chain: Double zinc ribbon protein TK0111 (62 aa).

Zn(2+)-binding residues include Cys13, Cys16, Cys31, Cys34, Cys42, Cys45, Cys54, and Cys57.

Crystallized in association with 70S ribosomes. The cofactor is Zn(2+).

This chain is Double zinc ribbon protein TK0111, found in Thermococcus kodakarensis (strain ATCC BAA-918 / JCM 12380 / KOD1) (Pyrococcus kodakaraensis (strain KOD1)).